The chain runs to 648 residues: Biosynthetic arginine decarboxylase (648 aa).

Lys-109 is subject to N6-(pyridoxal phosphate)lysine. Ile-291–Phe-301 is a substrate binding site.

Belongs to the Orn/Lys/Arg decarboxylase class-II family. SpeA subfamily. Mg(2+) is required as a cofactor. It depends on pyridoxal 5'-phosphate as a cofactor.

The enzyme catalyses L-arginine + H(+) = agmatine + CO2. It participates in amine and polyamine biosynthesis; agmatine biosynthesis; agmatine from L-arginine: step 1/1. Its function is as follows. Catalyzes the biosynthesis of agmatine from arginine. In Prochlorococcus marinus (strain MIT 9215), this protein is Biosynthetic arginine decarboxylase.